The sequence spans 266 residues: Heat-inducible transcription repressor HrcA (266 aa).

Belongs to the HrcA family.

Its function is as follows. Negative regulator of class I heat shock genes (grpE-dnaK-dnaJ and groELS operons). Prevents heat-shock induction of these operons. In Helicobacter pylori (strain ATCC 700392 / 26695) (Campylobacter pylori), this protein is Heat-inducible transcription repressor HrcA.